Here is a 319-residue protein sequence, read N- to C-terminus: Probable casein kinase II subunit alpha homolog (319 aa).

Residues 37 to 316 enclose the Protein kinase domain; it reads YQIYQRMGRG…ADECLRHPLF (280 aa). Residues 43–51 and K64 contribute to the ATP site; that span reads MGRGKYSEV. D151 serves as the catalytic Proton acceptor.

Belongs to the protein kinase superfamily. Ser/Thr protein kinase family. CK2 subfamily. Tetramer composed of two alpha chains, one beta chain and one beta' chain.

It carries out the reaction L-seryl-[protein] + ATP = O-phospho-L-seryl-[protein] + ADP + H(+). It catalyses the reaction L-threonyl-[protein] + ATP = O-phospho-L-threonyl-[protein] + ADP + H(+). In terms of biological role, catalytic subunit of a constitutively active serine/threonine-protein kinase complex that phosphorylates a large number of substrates containing acidic residues C-terminal to the phosphorylated serine or threonine. The sequence is that of Probable casein kinase II subunit alpha homolog (CKA1) from Encephalitozoon cuniculi (strain GB-M1) (Microsporidian parasite).